We begin with the raw amino-acid sequence, 249 residues long: 2,3-bisphosphoglycerate-dependent phosphoglycerate mutase (249 aa).

Substrate contacts are provided by residues 8-15 (RHGESTWN), 21-22 (TG), Arg60, 87-90 (ERHY), Lys98, 114-115 (RR), and 183-184 (GN). The Tele-phosphohistidine intermediate role is filled by His9. Glu87 (proton donor/acceptor) is an active-site residue.

It belongs to the phosphoglycerate mutase family. BPG-dependent PGAM subfamily. Homodimer.

The catalysed reaction is (2R)-2-phosphoglycerate = (2R)-3-phosphoglycerate. Its pathway is carbohydrate degradation; glycolysis; pyruvate from D-glyceraldehyde 3-phosphate: step 3/5. Its function is as follows. Catalyzes the interconversion of 2-phosphoglycerate and 3-phosphoglycerate. The sequence is that of 2,3-bisphosphoglycerate-dependent phosphoglycerate mutase from Azoarcus sp. (strain BH72).